Reading from the N-terminus, the 209-residue chain is ATP phosphoribosyltransferase (209 aa).

Belongs to the ATP phosphoribosyltransferase family. Short subfamily. Heteromultimer composed of HisG and HisZ subunits.

The protein resides in the cytoplasm. The catalysed reaction is 1-(5-phospho-beta-D-ribosyl)-ATP + diphosphate = 5-phospho-alpha-D-ribose 1-diphosphate + ATP. Its pathway is amino-acid biosynthesis; L-histidine biosynthesis; L-histidine from 5-phospho-alpha-D-ribose 1-diphosphate: step 1/9. Catalyzes the condensation of ATP and 5-phosphoribose 1-diphosphate to form N'-(5'-phosphoribosyl)-ATP (PR-ATP). Has a crucial role in the pathway because the rate of histidine biosynthesis seems to be controlled primarily by regulation of HisG enzymatic activity. The polypeptide is ATP phosphoribosyltransferase (Caldicellulosiruptor bescii (strain ATCC BAA-1888 / DSM 6725 / KCTC 15123 / Z-1320) (Anaerocellum thermophilum)).